Reading from the N-terminus, the 754-residue chain is Phosphatidylinositol 4-phosphate 5-kinase 7 (754 aa).

8 MORN repeats span residues 16–38, 39–61, 62–84, 85–107, 108–130, 131–153, 154–176, and 177–198; these read YSGE…DGTI, YEGD…SGAK, YEGD…DESV, YSGA…NSDL, YDGL…NGNR, YIGN…NGDL, YDGF…DGCL, and YYGT…AGTK. Residues 329 to 750 form the PIPK domain; it reads GEHNYYLMLN…RFVNFLHKVF (422 aa). Residues 710–731 are activation loop; sequence YNTKKKVEHTCKSLQYDPMTIS.

It catalyses the reaction a 1,2-diacyl-sn-glycero-3-phospho-(1D-myo-inositol 4-phosphate) + ATP = a 1,2-diacyl-sn-glycero-3-phospho-(1D-myo-inositol-4,5-bisphosphate) + ADP + H(+). This chain is Phosphatidylinositol 4-phosphate 5-kinase 7 (PIP5K7), found in Arabidopsis thaliana (Mouse-ear cress).